The chain runs to 68 residues: Copper transport protein ATOX1 (68 aa).

Positions 1 to 63 (MPKHEFSVDM…TLKKTGKTVS (63 aa)) constitute an HMA domain. Cys-12 and Cys-15 together coordinate Cu cation. A Phosphoserine modification is found at Ser-47. Lys-60 carries the post-translational modification N6-acetyllysine.

Belongs to the ATX1 family. Homodimer. Interacts with ATP7B. Interacts with ATP7A. Interacts (via dimer form) with SLC31A1 (via C-terminal domain); this interaction improves ATOX1 stability and controls intracellular Cu(I) levels. As to expression, ubiquitous.

Its function is as follows. Binds and deliver cytosolic copper to the copper ATPase proteins. May be important in cellular antioxidant defense. The sequence is that of Copper transport protein ATOX1 from Homo sapiens (Human).